A 28-amino-acid polypeptide reads, in one-letter code: uORF1 protein (28 aa).

Its subcellular location is the host cytoplasm. The protein localises to the host cytoskeleton. Functionally, plays a role in the reorganization of host microtubules and intermediate filaments to form a cytoskeletal cage that surrounds the viral factories, protecting the site of viral replication. May play a role in viral infection of human cortical neurons. The sequence is that of uORF1 protein from Zika virus (isolate ZIKV/Human/French Polynesia/10087PF/2013) (ZIKV).